A 660-amino-acid chain; its full sequence is Class E vacuolar protein-sorting machinery protein HSE1 (660 aa).

One can recognise a VHS domain in the interval 16 to 148 (ATDENLASED…QLRAKNHVFD (133 aa)). The tract at residues 146–254 (VFDEPEPTPE…QPLEPEPPRV (109 aa)) is disordered. Basic and acidic residues predominate over residues 158–182 (EEVRRRQEEEELQRVLELSKQDKGG). Positions 164–183 (QEEEELQRVLELSKQDKGGR) constitute a UIM domain. The segment covering 190–230 (PSGSAGASSSSAANNNTSPSIPQSQAQPLAQDQAQSQAAPQ) has biased composition (low complexity). In terms of domain architecture, SH3 spans 257 to 316 (NTATRVRAIYPFTGQEVGELDFERGDVIKVLDRGFKEWWRGACNGKIGIFPVTYVEALPE). Residues 437-503 (YSYQQYPQQP…PAQVQQDPAA (67 aa)) show a composition bias toward low complexity. A disordered region spans residues 437-660 (YSYQQYPQQP…GMDRMSVHAP (224 aa)). A compositionally biased stretch (polar residues) spans 517-533 (GSTTSVNRIPSAQTAVQ). 2 stretches are compositionally biased toward low complexity: residues 573–623 (QQHG…AAYA) and 638–651 (GTQQ…VTAG).

Belongs to the STAM family. Component of the ESCRT-0 complex composed of HSE1 and VPS27.

It localises to the endosome membrane. In terms of biological role, component of the ESCRT-0 complex which is the sorting receptor for ubiquitinated cargo proteins at the multivesicular body (MVB). The protein is Class E vacuolar protein-sorting machinery protein HSE1 (HSE1) of Cryptococcus neoformans var. neoformans serotype D (strain JEC21 / ATCC MYA-565) (Filobasidiella neoformans).